The chain runs to 492 residues: GTPase Der (492 aa).

2 consecutive EngA-type G domains span residues 3 to 167 and 188 to 363; these read PVVA…PAPE and ICIA…AQYA. Residues 9 to 16, 56 to 60, 119 to 122, 194 to 201, 241 to 245, and 306 to 309 each bind GTP; these read GRPNVGKS, DTGGF, NKVE, DTAGI, and NKWD. Residues 364 to 448 enclose the KH-like domain; that stretch reads YRINTGLLNR…PIRLLFRAKT (85 aa). The interval 464–492 is disordered; it reads VEKKEKKTTRRKKERKEQSRRKRVRDLKG. Basic residues predominate over residues 469–492; it reads KKTTRRKKERKEQSRRKRVRDLKG.

Belongs to the TRAFAC class TrmE-Era-EngA-EngB-Septin-like GTPase superfamily. EngA (Der) GTPase family. As to quaternary structure, associates with the 50S ribosomal subunit.

In terms of biological role, GTPase that plays an essential role in the late steps of ribosome biogenesis. This chain is GTPase Der, found in Desulforapulum autotrophicum (strain ATCC 43914 / DSM 3382 / VKM B-1955 / HRM2) (Desulfobacterium autotrophicum).